Consider the following 266-residue polypeptide: Undecaprenyl-diphosphatase 3 (266 aa).

The next 8 helical transmembrane spans lie at isoleucine 4–isoleucine 24, serine 43–tyrosine 63, phenylalanine 86–isoleucine 106, valine 109–tryptophan 129, isoleucine 145–threonine 165, threonine 186–leucine 206, asparagine 219–valine 239, and threonine 246–leucine 266.

This sequence belongs to the UppP family.

Its subcellular location is the cell inner membrane. The enzyme catalyses di-trans,octa-cis-undecaprenyl diphosphate + H2O = di-trans,octa-cis-undecaprenyl phosphate + phosphate + H(+). Its function is as follows. Catalyzes the dephosphorylation of undecaprenyl diphosphate (UPP). Confers resistance to bacitracin. The protein is Undecaprenyl-diphosphatase 3 of Acinetobacter baylyi (strain ATCC 33305 / BD413 / ADP1).